The following is a 204-amino-acid chain: Photosystem I reaction center subunit II-2, chloroplastic (204 aa).

The N-terminal 44 residues, 1–44, are a transit peptide targeting the chloroplast; that stretch reads MATQAAGIFSPAITTTTSAVKKLHLFSSSHRPKSLSFTKTAIRA. At Thr-47 the chain carries Phosphothreonine. The interval 47 to 71 is disordered; sequence TESSSAAPAVKEAPVGFTPPQLDPN. The tract at residues 137 to 145 is ferredoxin and ferredoxin-oxidoreductase binding; the sequence is RLRSKYKIT.

It belongs to the PsaD family. As to quaternary structure, interacts with CURT1C.

The protein localises to the plastid. It localises to the chloroplast thylakoid membrane. PSAD can form complexes with ferredoxin and ferredoxin-oxidoreductase in photosystem I (PS I) reaction center. PSAD may encode the ferredoxin-docking protein. This chain is Photosystem I reaction center subunit II-2, chloroplastic (PSAD2), found in Arabidopsis thaliana (Mouse-ear cress).